We begin with the raw amino-acid sequence, 540 residues long: Chaperonin GroEL (540 aa).

ATP-binding positions include 29-32 (TLGP), 86-90 (DGTTT), Gly413, 476-478 (NAA), and Asp492.

This sequence belongs to the chaperonin (HSP60) family. As to quaternary structure, forms a cylinder of 14 subunits composed of two heptameric rings stacked back-to-back. Interacts with the co-chaperonin GroES.

Its subcellular location is the cytoplasm. It carries out the reaction ATP + H2O + a folded polypeptide = ADP + phosphate + an unfolded polypeptide.. Together with its co-chaperonin GroES, plays an essential role in assisting protein folding. The GroEL-GroES system forms a nano-cage that allows encapsulation of the non-native substrate proteins and provides a physical environment optimized to promote and accelerate protein folding. The chain is Chaperonin GroEL from Streptococcus sanguinis.